Consider the following 199-residue polypeptide: Oleosin 21.2 kDa (199 aa).

Positions 1 to 14 (MADTHRVDRTDRHF) are enriched in basic and acidic residues. Positions 1-31 (MADTHRVDRTDRHFQFQSPYEGGRGQGQYEG) are disordered. The residue at position 2 (alanine 2) is an N-acetylalanine. Residues 2-56 (ADTHRVDRTDRHFQFQSPYEGGRGQGQYEGDRGYGGGGYKSMMPESGPSSTQVLS) form a polar region. Gly residues predominate over residues 22 to 31 (GGRGQGQYEG). A run of 3 helical transmembrane segments spans residues 51 to 71 (STQV…LALA), 72 to 92 (GLLL…FLLF), and 96 to 116 (IVPA…SGMF). A hydrophobic region spans residues 57–128 (LLIGVPVVGS…TGLSSISWVM (72 aa)). Positions 159–199 (KGKEMGQHVQNKAQDVKQYDISKPHDTTTKGHETQGRTTAA) are disordered. Residues 172–193 (QDVKQYDISKPHDTTTKGHETQ) are compositionally biased toward basic and acidic residues.

Belongs to the oleosin family.

The protein localises to the lipid droplet. Its subcellular location is the membrane. Its function is as follows. May have a structural role to stabilize the lipid body during desiccation of the seed by preventing coalescence of the oil. Probably interacts with both lipid and phospholipid moieties of lipid bodies. May also provide recognition signals for specific lipase anchorage in lipolysis during seedling growth. The polypeptide is Oleosin 21.2 kDa (Arabidopsis thaliana (Mouse-ear cress)).